Consider the following 209-residue polypeptide: Translation initiation factor IF-3 (209 aa).

It belongs to the IF-3 family. Monomer.

Its subcellular location is the cytoplasm. Its function is as follows. IF-3 binds to the 30S ribosomal subunit and shifts the equilibrium between 70S ribosomes and their 50S and 30S subunits in favor of the free subunits, thus enhancing the availability of 30S subunits on which protein synthesis initiation begins. The sequence is that of Translation initiation factor IF-3 from Chlorobium phaeobacteroides (strain DSM 266 / SMG 266 / 2430).